The following is a 727-amino-acid chain: 1,4-alpha-glucan branching enzyme GlgB (727 aa).

Catalysis depends on Asp411, which acts as the Nucleophile. Glu464 (proton donor) is an active-site residue.

The protein belongs to the glycosyl hydrolase 13 family. GlgB subfamily. As to quaternary structure, monomer.

The enzyme catalyses Transfers a segment of a (1-&gt;4)-alpha-D-glucan chain to a primary hydroxy group in a similar glucan chain.. It functions in the pathway glycan biosynthesis; glycogen biosynthesis. Catalyzes the formation of the alpha-1,6-glucosidic linkages in glycogen by scission of a 1,4-alpha-linked oligosaccharide from growing alpha-1,4-glucan chains and the subsequent attachment of the oligosaccharide to the alpha-1,6 position. The protein is 1,4-alpha-glucan branching enzyme GlgB of Protochlamydia amoebophila (strain UWE25).